Consider the following 488-residue polypeptide: Bifunctional protein HldE (488 aa).

A ribokinase region spans residues 1-332 (MRESFLDTIQ…QELQSQQSAA (332 aa)). Residue 208-211 (NKRE) participates in ATP binding. Aspartate 277 is an active-site residue. The interval 359 to 488 (FTNGCFDLLH…TSNIIRKLAS (130 aa)) is cytidylyltransferase.

It in the N-terminal section; belongs to the carbohydrate kinase PfkB family. The protein in the C-terminal section; belongs to the cytidylyltransferase family. In terms of assembly, homodimer.

The enzyme catalyses D-glycero-beta-D-manno-heptose 7-phosphate + ATP = D-glycero-beta-D-manno-heptose 1,7-bisphosphate + ADP + H(+). It carries out the reaction D-glycero-beta-D-manno-heptose 1-phosphate + ATP + H(+) = ADP-D-glycero-beta-D-manno-heptose + diphosphate. Its pathway is nucleotide-sugar biosynthesis; ADP-L-glycero-beta-D-manno-heptose biosynthesis; ADP-L-glycero-beta-D-manno-heptose from D-glycero-beta-D-manno-heptose 7-phosphate: step 1/4. The protein operates within nucleotide-sugar biosynthesis; ADP-L-glycero-beta-D-manno-heptose biosynthesis; ADP-L-glycero-beta-D-manno-heptose from D-glycero-beta-D-manno-heptose 7-phosphate: step 3/4. In terms of biological role, catalyzes the phosphorylation of D-glycero-D-manno-heptose 7-phosphate at the C-1 position to selectively form D-glycero-beta-D-manno-heptose-1,7-bisphosphate. Its function is as follows. Catalyzes the ADP transfer from ATP to D-glycero-beta-D-manno-heptose 1-phosphate, yielding ADP-D-glycero-beta-D-manno-heptose. In Methylobacillus flagellatus (strain ATCC 51484 / DSM 6875 / VKM B-1610 / KT), this protein is Bifunctional protein HldE.